The primary structure comprises 653 residues: Threonine--tRNA ligase (653 aa).

Residues 1-61 form the TGS domain; it reads MIKITFPDGN…NEDAEVKLFK (61 aa). The catalytic stretch occupies residues 243–542; that stretch reads DHRKIGKELE…LIEHTAGKFP (300 aa). Residues Cys-338, His-389, and His-519 each coordinate Zn(2+).

The protein belongs to the class-II aminoacyl-tRNA synthetase family. As to quaternary structure, homodimer. Zn(2+) is required as a cofactor.

It localises to the cytoplasm. It catalyses the reaction tRNA(Thr) + L-threonine + ATP = L-threonyl-tRNA(Thr) + AMP + diphosphate + H(+). In terms of biological role, catalyzes the attachment of threonine to tRNA(Thr) in a two-step reaction: L-threonine is first activated by ATP to form Thr-AMP and then transferred to the acceptor end of tRNA(Thr). Also edits incorrectly charged L-seryl-tRNA(Thr). The polypeptide is Threonine--tRNA ligase (Porphyromonas gingivalis (strain ATCC BAA-308 / W83)).